Reading from the N-terminus, the 638-residue chain is RNA exonuclease 3 (638 aa).

The segment at 37–136 is disordered; sequence AQDQVLEQKE…PPRRAPKEAL (100 aa). The segment covering 55–76 has biased composition (basic and acidic residues); sequence LKLEPRPEAKETPKDDLRHVSD. A compositionally biased stretch (polar residues) spans 77 to 111; it reads SGRSTPVKKTTAPATNAENISPVSRQPNIPKNTAT. One can recognise an Exonuclease domain in the interval 408-584; it reads ICFDCEMGYT…VEDALATGDL (177 aa). Residues 612–622 show a composition bias toward polar residues; the sequence is DSSSNTVSMQT. A disordered region spans residues 612–638; it reads DSSSNTVSMQTKLGEGAGAKRAREGTS.

It belongs to the REXO1/REXO3 family.

The protein resides in the cytoplasm. It is found in the nucleus. Functionally, 3' to 5' exoribonuclease required for proper 3' end maturation of MRP RNA and of the U5L snRNA. The chain is RNA exonuclease 3 (rex3) from Emericella nidulans (strain FGSC A4 / ATCC 38163 / CBS 112.46 / NRRL 194 / M139) (Aspergillus nidulans).